Here is a 342-residue protein sequence, read N- to C-terminus: Fructose-1,6-bisphosphatase class 1 (342 aa).

E91, D113, L115, and D116 together coordinate Mg(2+). Substrate is bound by residues 116–119 (DGSS), N211, and K277. E283 lines the Mg(2+) pocket.

It belongs to the FBPase class 1 family. Homotetramer. It depends on Mg(2+) as a cofactor.

It is found in the cytoplasm. It catalyses the reaction beta-D-fructose 1,6-bisphosphate + H2O = beta-D-fructose 6-phosphate + phosphate. It participates in carbohydrate biosynthesis; gluconeogenesis. This is Fructose-1,6-bisphosphatase class 1 from Bordetella petrii (strain ATCC BAA-461 / DSM 12804 / CCUG 43448).